The following is an 887-amino-acid chain: Alanine--tRNA ligase (887 aa).

Residues His-575, His-579, Cys-677, and His-681 each coordinate Zn(2+).

This sequence belongs to the class-II aminoacyl-tRNA synthetase family. The cofactor is Zn(2+).

The protein localises to the cytoplasm. The enzyme catalyses tRNA(Ala) + L-alanine + ATP = L-alanyl-tRNA(Ala) + AMP + diphosphate. Functionally, catalyzes the attachment of alanine to tRNA(Ala) in a two-step reaction: alanine is first activated by ATP to form Ala-AMP and then transferred to the acceptor end of tRNA(Ala). Also edits incorrectly charged Ser-tRNA(Ala) and Gly-tRNA(Ala) via its editing domain. The sequence is that of Alanine--tRNA ligase from Geobacillus kaustophilus (strain HTA426).